The chain runs to 621 residues: Glutathione-regulated potassium-efflux system protein KefC (621 aa).

13 helical membrane-spanning segments follow: residues His4–Val24, Leu26–Leu46, Ala54–Leu74, Gly90–Leu110, Val114–Met134, Phe149–Leu169, Leu178–Leu198, Val218–Val237, Gly238–Tyr257, Gly270–Val290, Leu294–Ile314, Arg326–Ala346, and Ala359–Thr379. The RCK N-terminal domain occupies Gln399–Thr518. Residues Gly598–Ala621 are disordered.

The protein belongs to the monovalent cation:proton antiporter 2 (CPA2) transporter (TC 2.A.37) family. KefC subfamily. In terms of assembly, homodimer. Interacts with the regulatory subunit KefF.

The protein localises to the cell inner membrane. Pore-forming subunit of a potassium efflux system that confers protection against electrophiles. Catalyzes K(+)/H(+) antiport. The chain is Glutathione-regulated potassium-efflux system protein KefC from Klebsiella pneumoniae subsp. pneumoniae (strain ATCC 700721 / MGH 78578).